The primary structure comprises 99 residues: Plastocyanin (99 aa).

The Plastocyanin-like domain maps to 1 to 99; that stretch reads IEILLGGDDG…AGMVGKVTVN (99 aa). Residues histidine 37, cysteine 84, histidine 87, and methionine 92 each contribute to the Cu cation site.

It belongs to the plastocyanin family. It depends on Cu(2+) as a cofactor.

It is found in the plastid. It localises to the chloroplast thylakoid membrane. Its function is as follows. Participates in electron transfer between P700 and the cytochrome b6-f complex in photosystem I. The chain is Plastocyanin (PETE) from Cucumis sativus (Cucumber).